The primary structure comprises 365 residues: Baculoviral IAP repeat-containing protein 7 (365 aa).

BIR repeat units follow at residues 7–73 (RQRS…PFLQ) and 115–180 (RLGS…DFLL). The Zn(2+) site is built by cysteine 149, cysteine 152, histidine 169, and cysteine 176. Residues 186–234 (AFIRSVQESFFSSPETSPESVGSYEGSPVSSPGSPPVCPFLSTSVAQGA) are self-inhibits the anti-apoptotic function. Position 198 is a phosphoserine (serine 198). Residue serine 202 is modified to Phosphoserine; by MAPK1. Serine 212 carries the post-translational modification Phosphoserine. A phosphoserine; by MAPK1 mark is found at serine 216 and serine 219. Residues 278-306 (TESVSVPRAPTQRERPEPPKEPAPPLSTE) are disordered. The span at 288 to 297 (TQRERPEPPK) shows a compositional bias: basic and acidic residues. The RING-type zinc-finger motif lies at 318–353 (CKVCMDNDVSMVFVPCGHLVVCTECAPNLRHCPICR).

Belongs to the IAP family. Auto-ubiquitinated, and degraded in a 2-step mechanism; a caspase-independent first step and a caspase-dependent second step. Post-translationally, phosphorylated via MAPK-dependent and CDK-dependent pathways during oocyte maturation. Phosphorylation does not appear to affect caspase inhibition or autoubiquitination activity.

It is found in the cytoplasm. It carries out the reaction S-ubiquitinyl-[E2 ubiquitin-conjugating enzyme]-L-cysteine + [acceptor protein]-L-lysine = [E2 ubiquitin-conjugating enzyme]-L-cysteine + N(6)-ubiquitinyl-[acceptor protein]-L-lysine.. Its function is as follows. Weak apoptotic suppressor. Has E3 ubiquitin-protein ligase activity. Weak inhibitor of caspase activity. This Xenopus tropicalis (Western clawed frog) protein is Baculoviral IAP repeat-containing protein 7 (birc7).